Here is a 419-residue protein sequence, read N- to C-terminus: MLNQFPGQLSNNVFCFPPIESETKSGKKASWIICVQVMHHNTILPITDEMFSTDVKDAVAEIFTKFFVEEGAVRISKTTRVTEGKNLGKKNATTVVHQAFKDALSKYNRHARQKRGAHTNRGMIPPMLVKHFNIIPKTFFEDETDPIVQRKRNGVRAVACQQGDGSILLYSRTEKEFLGLDNIKKELKQLYLFIDVRVYLDGELYLHHKPLQWIAGQANAKVDSSELHFYVFDCFWSDQLQMPSNKRQQLLTNIFKQKEDLIFIHQVENFSIKDEDEALRLKTQFIKEGYEGAIVRNANGPYEPGYNNYHSPHLAKLKPLLDAEFILVDYTQGKKGKDLGAILWVCELPNKKRFVVTPKHLTYADRYALFQKLTPALFKKHLYGKELTVEYAELSPKTGIPLQARAVGFREPINVLEII.

An NTD region spans residues 1 to 120; it reads MLNQFPGQLS…ARQKRGAHTN (120 aa). The interval 121-317 is AD domain; that stretch reads RGMIPPMLVK…NYHSPHLAKL (197 aa). Lys151 acts as the N6-AMP-lysine intermediate in catalysis. The interval 318–419 is OB domain; it reads KPLLDAEFIL…REPINVLEII (102 aa).

It belongs to the ATP-dependent DNA ligase family.

It is found in the virion. The enzyme catalyses ATP + (deoxyribonucleotide)n-3'-hydroxyl + 5'-phospho-(deoxyribonucleotide)m = (deoxyribonucleotide)n+m + AMP + diphosphate.. Functionally, very low-fidelity DNA ligase that seals nicks in double-stranded DNA during DNA repair. Together with the viral repair DNA polymerase X, fills the single nucleotide gaps generated by the AP endonuclease. It is not essential for viral replication and recombination. Displays a very low adenylation activity towards DNA with 3'-dideoxy- or 3'-amino-terminated nicks compared to regular nick DNA. This chain is DNA ligase, found in Ornithodoros (relapsing fever ticks).